Reading from the N-terminus, the 360-residue chain is Thioredoxin domain-containing protein 15 (360 aa).

An N-terminal signal peptide occupies residues 1–32; that stretch reads MVPAAGRRPPRVMRLLGWWQVLLWVLGLPVRG. The Extracellular portion of the chain corresponds to 33–321; sequence VEVAEESGRL…GPLPSTLIKS (289 aa). The segment at 141–173 is disordered; sequence PDREEEYYTEPEVAESDAAPTEDSNNTESLKSP. Acidic residues predominate over residues 143–155; it reads REEEYYTEPEVAE. The Thioredoxin domain maps to 153–296; that stretch reads VAESDAAPTE…LKIFIFNQTG (144 aa). Residues Asn-187, Asn-194, Asn-206, and Asn-293 are each glycosylated (N-linked (GlcNAc...) asparagine). Residues 322–342 form a helical membrane-spanning segment; the sequence is VDWLLVFSLFFLISFIMYATI. Over 343–360 the chain is Cytoplasmic; sequence RTESIRWLIPGQEQEHVE.

It localises to the cell projection. The protein localises to the cilium membrane. In terms of biological role, acts as a positive regulator of ciliary hedgehog signaling. Involved in ciliogenesis. In Homo sapiens (Human), this protein is Thioredoxin domain-containing protein 15 (TXNDC15).